Consider the following 619-residue polypeptide: Dihydroxy-acid dehydratase (619 aa).

Residue Asp81 participates in Mg(2+) binding. Cys122 provides a ligand contact to [2Fe-2S] cluster. 2 residues coordinate Mg(2+): Asp123 and Lys124. N6-carboxylysine is present on Lys124. Position 195 (Cys195) interacts with [2Fe-2S] cluster. Mg(2+) is bound at residue Glu494. The active-site Proton acceptor is Ser520.

The protein belongs to the IlvD/Edd family. Homodimer. It depends on [2Fe-2S] cluster as a cofactor. Mg(2+) is required as a cofactor.

It carries out the reaction (2R)-2,3-dihydroxy-3-methylbutanoate = 3-methyl-2-oxobutanoate + H2O. It catalyses the reaction (2R,3R)-2,3-dihydroxy-3-methylpentanoate = (S)-3-methyl-2-oxopentanoate + H2O. Its pathway is amino-acid biosynthesis; L-isoleucine biosynthesis; L-isoleucine from 2-oxobutanoate: step 3/4. It participates in amino-acid biosynthesis; L-valine biosynthesis; L-valine from pyruvate: step 3/4. Functionally, functions in the biosynthesis of branched-chain amino acids. Catalyzes the dehydration of (2R,3R)-2,3-dihydroxy-3-methylpentanoate (2,3-dihydroxy-3-methylvalerate) into 2-oxo-3-methylpentanoate (2-oxo-3-methylvalerate) and of (2R)-2,3-dihydroxy-3-methylbutanoate (2,3-dihydroxyisovalerate) into 2-oxo-3-methylbutanoate (2-oxoisovalerate), the penultimate precursor to L-isoleucine and L-valine, respectively. In Shewanella sp. (strain MR-7), this protein is Dihydroxy-acid dehydratase.